Here is a 490-residue protein sequence, read N- to C-terminus: Pleckstrin homology domain-containing family O member 2 (490 aa).

A PH domain is found at Met-18–Asn-119. Phosphoserine occurs at positions 164 and 167. The segment at Leu-173–Pro-402 is disordered. A compositionally biased stretch (low complexity) spans Ala-230–Glu-243. Phosphothreonine is present on Thr-232. Phosphoserine is present on residues Ser-235, Ser-237, and Ser-238. Positions Ser-244–Gly-257 are enriched in acidic residues. Ser-273 bears the Phosphoserine mark. Residues Pro-277–Glu-297 show a composition bias toward low complexity. Residues Thr-298 and Thr-311 each carry the phosphothreonine modification. Phosphoserine occurs at positions 390 and 468. The stretch at Ser-439–Leu-481 forms a coiled coil.

The sequence is that of Pleckstrin homology domain-containing family O member 2 (PLEKHO2) from Homo sapiens (Human).